The primary structure comprises 399 residues: Acetate kinase (399 aa).

Residue Asn-9 participates in Mg(2+) binding. Residue Lys-16 coordinates ATP. Residue Arg-90 participates in substrate binding. The active-site Proton donor/acceptor is Asp-147. Residues 207–211 (HIGNG), 282–284 (DLR), and 330–334 (GVGEN) each bind ATP. Glu-384 lines the Mg(2+) pocket.

The protein belongs to the acetokinase family. As to quaternary structure, homodimer. It depends on Mg(2+) as a cofactor. Mn(2+) serves as cofactor.

The protein localises to the cytoplasm. It carries out the reaction acetate + ATP = acetyl phosphate + ADP. It functions in the pathway metabolic intermediate biosynthesis; acetyl-CoA biosynthesis; acetyl-CoA from acetate: step 1/2. Its function is as follows. Catalyzes the formation of acetyl phosphate from acetate and ATP. Can also catalyze the reverse reaction. This is Acetate kinase from Staphylococcus saprophyticus subsp. saprophyticus (strain ATCC 15305 / DSM 20229 / NCIMB 8711 / NCTC 7292 / S-41).